The chain runs to 122 residues: Large ribosomal subunit protein uL14 (122 aa).

The protein belongs to the universal ribosomal protein uL14 family. In terms of assembly, part of the 50S ribosomal subunit. Forms a cluster with proteins L3 and L19. In the 70S ribosome, L14 and L19 interact and together make contacts with the 16S rRNA in bridges B5 and B8.

Functionally, binds to 23S rRNA. Forms part of two intersubunit bridges in the 70S ribosome. The polypeptide is Large ribosomal subunit protein uL14 (Mycobacterium tuberculosis (strain ATCC 25177 / H37Ra)).